Consider the following 499-residue polypeptide: Glycerol kinase (499 aa).

ADP is bound at residue Thr13. The ATP site is built by Thr13, Thr14, and Ser15. Thr13 is a sn-glycerol 3-phosphate binding site. Arg17 is a binding site for ADP. The sn-glycerol 3-phosphate site is built by Arg83, Glu84, Tyr135, and Asp245. 5 residues coordinate glycerol: Arg83, Glu84, Tyr135, Asp245, and Gln246. Residues Thr267 and Gly310 each coordinate ADP. Thr267, Gly310, Gln314, and Gly411 together coordinate ATP. Gly411 and Asn415 together coordinate ADP.

The protein belongs to the FGGY kinase family.

It catalyses the reaction glycerol + ATP = sn-glycerol 3-phosphate + ADP + H(+). Its pathway is polyol metabolism; glycerol degradation via glycerol kinase pathway; sn-glycerol 3-phosphate from glycerol: step 1/1. Its activity is regulated as follows. Inhibited by fructose 1,6-bisphosphate (FBP). Functionally, key enzyme in the regulation of glycerol uptake and metabolism. Catalyzes the phosphorylation of glycerol to yield sn-glycerol 3-phosphate. The protein is Glycerol kinase of Stenotrophomonas maltophilia (strain K279a).